The following is a 356-amino-acid chain: Phospho-N-acetylmuramoyl-pentapeptide-transferase (356 aa).

A run of 9 helical transmembrane segments spans residues 27 to 47 (AAAI…IGWM), 74 to 94 (MGGL…MDFA), 97 to 117 (YVWA…IDDY), 128 to 148 (VSGK…CYLI), 164 to 184 (PVID…VGTA), 201 to 221 (VIIA…AVFA), 241 to 261 (AIIG…AIFM), 284 to 304 (IVLG…IIQV), and 333 to 353 (TVVI…LATL).

The protein belongs to the glycosyltransferase 4 family. MraY subfamily. It depends on Mg(2+) as a cofactor.

Its subcellular location is the cell inner membrane. It catalyses the reaction UDP-N-acetyl-alpha-D-muramoyl-L-alanyl-gamma-D-glutamyl-meso-2,6-diaminopimeloyl-D-alanyl-D-alanine + di-trans,octa-cis-undecaprenyl phosphate = di-trans,octa-cis-undecaprenyl diphospho-N-acetyl-alpha-D-muramoyl-L-alanyl-D-glutamyl-meso-2,6-diaminopimeloyl-D-alanyl-D-alanine + UMP. Its pathway is cell wall biogenesis; peptidoglycan biosynthesis. Its function is as follows. Catalyzes the initial step of the lipid cycle reactions in the biosynthesis of the cell wall peptidoglycan: transfers peptidoglycan precursor phospho-MurNAc-pentapeptide from UDP-MurNAc-pentapeptide onto the lipid carrier undecaprenyl phosphate, yielding undecaprenyl-pyrophosphoryl-MurNAc-pentapeptide, known as lipid I. This chain is Phospho-N-acetylmuramoyl-pentapeptide-transferase, found in Zymomonas mobilis subsp. mobilis (strain ATCC 31821 / ZM4 / CP4).